A 121-amino-acid polypeptide reads, in one-letter code: Small ribosomal subunit protein bS16 (121 aa).

A compositionally biased stretch (basic and acidic residues) spans 97–114; that stretch reads LAKAKTKDEENDNSKVES. Positions 97-121 are disordered; the sequence is LAKAKTKDEENDNSKVESEGNEAES.

The protein belongs to the bacterial ribosomal protein bS16 family.

The sequence is that of Small ribosomal subunit protein bS16 from Prochlorococcus marinus (strain AS9601).